We begin with the raw amino-acid sequence, 119 residues long: NADH dehydrogenase [ubiquinone] 1 subunit C2 (119 aa).

The helical transmembrane segment at 56–75 (GLHRQLLYITAFFFAGYYLV) threads the bilayer.

This sequence belongs to the complex I NDUFC2 subunit family. Complex I is composed of 45 different subunits. Interacts with TMEM242.

The protein resides in the mitochondrion inner membrane. Accessory subunit of the mitochondrial membrane respiratory chain NADH dehydrogenase (Complex I), that is believed not to be involved in catalysis but required for the complex assembly. Complex I functions in the transfer of electrons from NADH to the respiratory chain. The immediate electron acceptor for the enzyme is believed to be ubiquinone. The polypeptide is NADH dehydrogenase [ubiquinone] 1 subunit C2 (Pongo pygmaeus (Bornean orangutan)).